The sequence spans 138 residues: Large ribosomal subunit protein bL17 (138 aa).

The protein belongs to the bacterial ribosomal protein bL17 family. As to quaternary structure, part of the 50S ribosomal subunit. Contacts protein L32.

The sequence is that of Large ribosomal subunit protein bL17 from Bradyrhizobium diazoefficiens (strain JCM 10833 / BCRC 13528 / IAM 13628 / NBRC 14792 / USDA 110).